We begin with the raw amino-acid sequence, 239 residues long: Probable transcriptional regulatory protein YeeI (239 aa).

Belongs to the TACO1 family. YeeN subfamily.

It is found in the cytoplasm. The chain is Probable transcriptional regulatory protein YeeI (yeeI) from Bacillus subtilis (strain 168).